We begin with the raw amino-acid sequence, 189 residues long: Large ribosomal subunit protein bL9 (189 aa).

The protein belongs to the bacterial ribosomal protein bL9 family.

Functionally, binds to the 23S rRNA. This Beijerinckia indica subsp. indica (strain ATCC 9039 / DSM 1715 / NCIMB 8712) protein is Large ribosomal subunit protein bL9.